Here is a 508-residue protein sequence, read N- to C-terminus: MAQQPLLSLPEFQSVSTGTLVVKEPLNFWGGARVKPRDTKNSEPVYEPATGRVLCDMIPCGEEEVDQAIKSAHSAYLKWSQLSGMERSRIMLEAARIIRERRNAIAKAEVANNGKSITEAEVDIDVAWQCIEYYAGIAPTLSGQHIQLPGGSFAYTRREPLGVCVGIGAWNYPFQIAAWKSAPALACGNAMVFKPSPMTPVTAVMLAEIYKEAGVPDGLFNVVQGGAETGSLLCHHPMVAKVSFTGSVPTGKKVMEMAAKSVKQVTLELGGKSPLIIFKDCELENAIKGALMANFLTQGEVCCNGTRVFVQREIMPKFLEEVVKRTKAISVGDPLCEGTRMGALISKPHMEKVLGFIKQAKEQGGKVLCGGERFVPNDPKLKDGYFVSPCVLDNCRDDMTCVKEEIFGPVMSVLPFDTEEEVLQRANNTTFGLASGVFTRDIARAHRVAANLQAGTCYINNYNVGPVEVPFGGYKMSGFGRENGTVTIEYYSQLKTVVVEMGDVESLF.

Residues Lys194 and 246–250 (GSVPT) contribute to the NAD(+) site. Residue Glu268 is the Proton acceptor of the active site. The Nucleophile role is filled by Cys302. Glu405 contacts NAD(+).

The protein belongs to the aldehyde dehydrogenase family. Homotetramer.

It is found in the cytoplasm. It localises to the cytosol. It catalyses the reaction 4-(trimethylamino)butanal + NAD(+) + H2O = 4-(trimethylamino)butanoate + NADH + 2 H(+). It carries out the reaction an aldehyde + NAD(+) + H2O = a carboxylate + NADH + 2 H(+). Its pathway is amine and polyamine biosynthesis; carnitine biosynthesis. In terms of biological role, converts gamma-trimethylaminobutyraldehyde into gamma-butyrobetaine with high efficiency (in vitro). Can catalyze the irreversible oxidation of a broad range of aldehydes to the corresponding acids in an NAD-dependent reaction, but with low efficiency. The chain is 4-trimethylaminobutyraldehyde dehydrogenase A (aldh9a1a) from Danio rerio (Zebrafish).